The following is a 534-amino-acid chain: Acetyltransferase MATC1 (534 aa).

Catalysis depends on proton acceptor residues H186 and D459.

It belongs to the plant acyltransferase family.

The protein localises to the cell membrane. Its pathway is secondary metabolite biosynthesis. Its function is as follows. Acetyltransferase; part of the gene cluster that mediates the biosynthesis of mannosylerythritol lipids (MELs), surface-active substances that enhance the availability of water-insoluble substrates. Mannosylerythritol lipid production is responsible for hemolytic activity of Ustilago maydis. Depending on the number of acetyl groups, mannosylerythritol lipids can be differentiated into MEL A (fully acetylated), MEL B and MEL C (monoacetylated at R-6 and R-4, respectively), and the fully deacetylated MEL D. The first step in the pathway is the generation of mannosylerythritol by the glycosyltransferase EMT1 which catalyzes the transfer of GDP-mannose to the C-4 atom of meso-erythritol. This reaction has to be stereospecific, since only mannosyl-D-erythritol is generated. The produced disaccharide is subsequently acylated with fatty acids of various lengths derived from the peroxisomal beta-oxidation by the peroxisomal acyltransferases MAC1 and MAC2 at positions C-2 and C-3, repectively. The existence of MEL derivatives which carry an acetyl group at C-2 implies that at least MAC1 also accepts acetyl-CoA as a donor. The final step of MEL biosynthesis is the acetylation of the fully acylated mannosylerythritol lipids catalyzed by the acetyl-CoA-dependent acetyltransferase MAT1. MAT1 displays a relaxed regioselectivity and is able to transfer acetylgroups to both positions C-4 and C-6 of the mannosyl moiety. The chain is Acetyltransferase MATC1 from Mycosarcoma maydis (Corn smut fungus).